A 75-amino-acid chain; its full sequence is UPF0352 protein YejL (75 aa).

It belongs to the UPF0352 family.

The sequence is that of UPF0352 protein YejL from Shigella flexneri.